Here is a 386-residue protein sequence, read N- to C-terminus: Delta(7)-sterol 5(6)-desaturase (386 aa).

A run of 3 helical transmembrane segments spans residues V119–Y139, I172–F192, and A206–H226. The Fatty acid hydroxylase domain maps to F214–N337. Residues H226–H230 carry the Histidine box-1 motif. The short motif at H239–H243 is the Histidine box-2 element. A helical transmembrane segment spans residues P272 to W292. The Histidine box-3 motif lies at H314–H318.

The protein belongs to the sterol desaturase family. It depends on Fe cation as a cofactor.

It is found in the endoplasmic reticulum membrane. The catalysed reaction is a Delta(7)-sterol + 2 Fe(II)-[cytochrome b5] + O2 + 2 H(+) = a Delta(5),Delta(7)-sterol + 2 Fe(III)-[cytochrome b5] + 2 H2O. Its pathway is steroid metabolism; ergosterol biosynthesis; ergosterol from zymosterol: step 3/5. Functionally, catalyzes the introduction of a C-5 double bond in the B ring of ergosterol. May contribute to the regulation of ergosterol biosynthesis. The protein is Delta(7)-sterol 5(6)-desaturase (ERG3) of Candida dubliniensis (strain CD36 / ATCC MYA-646 / CBS 7987 / NCPF 3949 / NRRL Y-17841) (Yeast).